We begin with the raw amino-acid sequence, 256 residues long: Undecaprenyl-diphosphatase (256 aa).

8 helical membrane-spanning segments follow: residues 5 to 25 (IIEIIILSIVQGISEFLPISS), 41 to 61 (NSLMIDVSLHLGSLLAIVFYF), 74 to 94 (LLSLLIIGSIPIVIAGYVISS), 100 to 120 (LLENNLKIIAWTTLIFGIILY), 135 to 155 (LNFKTILYIGLFQILALIPGV), 180 to 200 (FLLAIPAIAGASVLQLKNAIG), 208 to 228 (LVLISITLSFLFSYFTVKFFL), and 234 to 254 (FSLNVFVIYRIIISIILFIII).

This sequence belongs to the UppP family.

The protein localises to the cell inner membrane. It catalyses the reaction di-trans,octa-cis-undecaprenyl diphosphate + H2O = di-trans,octa-cis-undecaprenyl phosphate + phosphate + H(+). Catalyzes the dephosphorylation of undecaprenyl diphosphate (UPP). Confers resistance to bacitracin. This chain is Undecaprenyl-diphosphatase, found in Pelagibacter ubique (strain HTCC1062).